The sequence spans 865 residues: Valine--tRNA ligase (865 aa).

Positions 43 to 53 (PNITGRIHMGH) match the 'HIGH' region motif. The 'KMSKS' region signature appears at 523–527 (KMSKS). ATP is bound at residue Lys526. Positions 797–865 (GLIDFEKEKE…RLESILRDLE (69 aa)) form a coiled coil.

The protein belongs to the class-I aminoacyl-tRNA synthetase family. ValS type 1 subfamily. In terms of assembly, monomer.

The protein localises to the cytoplasm. It carries out the reaction tRNA(Val) + L-valine + ATP = L-valyl-tRNA(Val) + AMP + diphosphate. Catalyzes the attachment of valine to tRNA(Val). As ValRS can inadvertently accommodate and process structurally similar amino acids such as threonine, to avoid such errors, it has a 'posttransfer' editing activity that hydrolyzes mischarged Thr-tRNA(Val) in a tRNA-dependent manner. The sequence is that of Valine--tRNA ligase from Thermotoga maritima (strain ATCC 43589 / DSM 3109 / JCM 10099 / NBRC 100826 / MSB8).